A 388-amino-acid chain; its full sequence is Chorismate synthase (388 aa).

The NADP(+) site is built by R39 and R45. Residues 130–132 (RSS), 251–252 (NA), G296, 311–315 (KPIPT), and R337 each bind FMN.

This sequence belongs to the chorismate synthase family. Homotetramer. FMNH2 is required as a cofactor.

The catalysed reaction is 5-O-(1-carboxyvinyl)-3-phosphoshikimate = chorismate + phosphate. It functions in the pathway metabolic intermediate biosynthesis; chorismate biosynthesis; chorismate from D-erythrose 4-phosphate and phosphoenolpyruvate: step 7/7. In terms of biological role, catalyzes the anti-1,4-elimination of the C-3 phosphate and the C-6 proR hydrogen from 5-enolpyruvylshikimate-3-phosphate (EPSP) to yield chorismate, which is the branch point compound that serves as the starting substrate for the three terminal pathways of aromatic amino acid biosynthesis. This reaction introduces a second double bond into the aromatic ring system. In Streptococcus pyogenes serotype M12 (strain MGAS2096), this protein is Chorismate synthase.